A 277-amino-acid polypeptide reads, in one-letter code: Digeranylgeranylglyceryl phosphate synthase (277 aa).

The next 7 membrane-spanning stretches (helical) occupy residues 16 to 36, 40 to 60, 101 to 121, 129 to 149, 153 to 173, 205 to 225, and 257 to 277; these read ILAG…IPSI, GLVF…NDYF, FLGV…FIYA, FIGN…GALG, VGLA…REIM, IFGV…IGLG, and LKIA…TKGV.

This sequence belongs to the UbiA prenyltransferase family. DGGGP synthase subfamily. Requires Mg(2+) as cofactor.

Its subcellular location is the cell membrane. The enzyme catalyses sn-3-O-(geranylgeranyl)glycerol 1-phosphate + (2E,6E,10E)-geranylgeranyl diphosphate = 2,3-bis-O-(geranylgeranyl)-sn-glycerol 1-phosphate + diphosphate. It participates in membrane lipid metabolism; glycerophospholipid metabolism. Prenyltransferase that catalyzes the transfer of the geranylgeranyl moiety of geranylgeranyl diphosphate (GGPP) to the C2 hydroxyl of (S)-3-O-geranylgeranylglyceryl phosphate (GGGP). This reaction is the second ether-bond-formation step in the biosynthesis of archaeal membrane lipids. This chain is Digeranylgeranylglyceryl phosphate synthase, found in Pyrococcus abyssi (strain GE5 / Orsay).